The following is a 63-amino-acid chain: Large ribosomal subunit protein uL30 (63 aa).

Belongs to the universal ribosomal protein uL30 family. As to quaternary structure, part of the 50S ribosomal subunit.

This chain is Large ribosomal subunit protein uL30, found in Hahella chejuensis (strain KCTC 2396).